Here is a 78-residue protein sequence, read N- to C-terminus: MKSSVNIQDHFLNQLRKENIPVTVFLLNGFQLRGLVKGFDNFTVILETEGKQQLVYKHAISTFAPQRNVQMKTENEPS.

Positions 9–69 constitute a Sm domain; it reads DHFLNQLRKE…ISTFAPQRNV (61 aa).

The protein belongs to the Hfq family. As to quaternary structure, homohexamer.

Functionally, RNA chaperone that binds small regulatory RNA (sRNAs) and mRNAs to facilitate mRNA translational regulation in response to envelope stress, environmental stress and changes in metabolite concentrations. Also binds with high specificity to tRNAs. The sequence is that of RNA-binding protein Hfq from Halalkalibacterium halodurans (strain ATCC BAA-125 / DSM 18197 / FERM 7344 / JCM 9153 / C-125) (Bacillus halodurans).